The primary structure comprises 404 residues: Ethanolamine-phosphate cytidylyltransferase (404 aa).

The interval 173–201 (YADSFGKPPHPTPAGDTLSSEVSSQCPGG) is disordered. Polar residues predominate over residues 189 to 201 (TLSSEVSSQCPGG). CTP-binding positions include 239-240 (AF), 247-250 (HVDF), lysine 277, 325-328 (HGKT), and 354-358 (SGSDL). A Phosphoserine modification is found at serine 356. Residues threonine 359 and threonine 360 each carry the phosphothreonine modification.

This sequence belongs to the cytidylyltransferase family.

It carries out the reaction phosphoethanolamine + CTP + H(+) = CDP-ethanolamine + diphosphate. Its pathway is phospholipid metabolism; phosphatidylethanolamine biosynthesis; phosphatidylethanolamine from ethanolamine: step 2/3. Functionally, ethanolamine-phosphate cytidylyltransferase that catalyzes the second step in the synthesis of phosphatidylethanolamine (PE) from ethanolamine via the CDP-ethanolamine pathway. Phosphatidylethanolamine is a dominant inner-leaflet phospholipid in cell membranes, where it plays a role in membrane function by structurally stabilizing membrane-anchored proteins, and participates in important cellular processes such as cell division, cell fusion, blood coagulation, and apoptosis. This Mus musculus (Mouse) protein is Ethanolamine-phosphate cytidylyltransferase (Pcyt2).